A 105-amino-acid chain; its full sequence is Ketoisovalerate oxidoreductase subunit VorD (105 aa).

2 consecutive 4Fe-4S ferredoxin-type domains span residues 44–73 (FKPV…IKPD) and 74–103 (GYVA…MIKE). 8 residues coordinate [4Fe-4S] cluster: cysteine 53, cysteine 56, cysteine 59, cysteine 63, cysteine 83, cysteine 86, cysteine 89, and cysteine 93.

As to quaternary structure, heterotetramer of one alpha, one beta, one delta and one gamma chain. It depends on [4Fe-4S] cluster as a cofactor.

It carries out the reaction 3-methyl-2-oxobutanoate + 2 oxidized [2Fe-2S]-[ferredoxin] + CoA = 2-methylpropanoyl-CoA + 2 reduced [2Fe-2S]-[ferredoxin] + CO2 + H(+). The chain is Ketoisovalerate oxidoreductase subunit VorD (vorD) from Pyrococcus furiosus (strain ATCC 43587 / DSM 3638 / JCM 8422 / Vc1).